Consider the following 429-residue polypeptide: Hemoglobinase (429 aa).

The N-terminal stretch at Met1–Cys19 is a signal peptide. Residues Gln20 to Thr31 constitute a propeptide that is removed on maturation. His151 is an active-site residue. A disordered region spans residues Phe288 to Ser309. Residues Arg292–Gly429 constitute a propeptide that is removed on maturation.

The protein belongs to the peptidase C13 family.

The catalysed reaction is Hydrolysis of proteins and small molecule substrates at -Asn-|-Xaa- bonds.. Functionally, this protease is used by the parasite for degradation of the host globin. The protein is Hemoglobinase of Schistosoma mansoni (Blood fluke).